A 201-amino-acid polypeptide reads, in one-letter code: Small ribosomal subunit protein uS4c (201 aa).

The S4 RNA-binding domain maps to 89–152 (MRLDNILFRL…NSRTLVQNLL (64 aa)).

This sequence belongs to the universal ribosomal protein uS4 family. In terms of assembly, part of the 30S ribosomal subunit. Contacts protein S5. The interaction surface between S4 and S5 is involved in control of translational fidelity.

The protein resides in the plastid. Its subcellular location is the chloroplast. One of the primary rRNA binding proteins, it binds directly to 16S rRNA where it nucleates assembly of the body of the 30S subunit. Functionally, with S5 and S12 plays an important role in translational accuracy. This is Small ribosomal subunit protein uS4c (rps4) from Olimarabidopsis pumila (Dwarf rocket).